We begin with the raw amino-acid sequence, 315 residues long: Transaldolase (315 aa).

Lys125 functions as the Schiff-base intermediate with substrate in the catalytic mechanism.

Belongs to the transaldolase family. Type 1 subfamily. Homodimer.

It is found in the cytoplasm. The catalysed reaction is D-sedoheptulose 7-phosphate + D-glyceraldehyde 3-phosphate = D-erythrose 4-phosphate + beta-D-fructose 6-phosphate. Its pathway is carbohydrate degradation; pentose phosphate pathway; D-glyceraldehyde 3-phosphate and beta-D-fructose 6-phosphate from D-ribose 5-phosphate and D-xylulose 5-phosphate (non-oxidative stage): step 2/3. In terms of biological role, transaldolase is important for the balance of metabolites in the pentose-phosphate pathway. The polypeptide is Transaldolase (Polaromonas naphthalenivorans (strain CJ2)).